Here is a 368-residue protein sequence, read N- to C-terminus: RAB6-interacting golgin (368 aa).

Disordered regions lie at residues 1–43, 55–133, and 302–368; these read MAQD…REKA, DGSA…DCKV, and KQMA…AVAT. Residues 11–27 are compositionally biased toward basic and acidic residues; sequence EELRRLKQNKDPFEPQR. The span at 80–89 shows a compositional bias: pro residues; sequence SPSPVAPSPL. Basic and acidic residues predominate over residues 114 to 133; it reads NSHHGHKSAEVRAPKPDCKV. Positions 145–310 form a coiled coil; the sequence is RWEVLQQEQR…AKQMASVERL (166 aa). The segment at 188-368 is necessary for interaction with RCHY1; sequence IQKELQALDD…AKNFSAAVAT (181 aa).

This sequence belongs to the GORAB family. Interacts with RCHY1. Interacts with SCYL1 and RAB6A/RAB6. In terms of tissue distribution, expressed in small intestine, kidney, skeletal muscle, lung, spleen, brain and heart. High expression is observed in osteoblasts and skin; also expressed in osteoclasts albeit at lower levels.

It localises to the cytoplasm. It is found in the golgi apparatus. The polypeptide is RAB6-interacting golgin (Gorab) (Mus musculus (Mouse)).